We begin with the raw amino-acid sequence, 176 residues long: Shikimate kinase (176 aa).

14–19 is a binding site for ATP; it reads GAGKST. A Mg(2+)-binding site is contributed by Ser18. Substrate contacts are provided by Asp36, Arg60, and Gly83. ATP is bound at residue Arg121. Arg140 is a binding site for substrate.

It belongs to the shikimate kinase family. In terms of assembly, monomer. Requires Mg(2+) as cofactor.

Its subcellular location is the cytoplasm. It carries out the reaction shikimate + ATP = 3-phosphoshikimate + ADP + H(+). The protein operates within metabolic intermediate biosynthesis; chorismate biosynthesis; chorismate from D-erythrose 4-phosphate and phosphoenolpyruvate: step 5/7. Its function is as follows. Catalyzes the specific phosphorylation of the 3-hydroxyl group of shikimic acid using ATP as a cosubstrate. This is Shikimate kinase from Francisella tularensis subsp. holarctica (strain FTNF002-00 / FTA).